A 294-amino-acid polypeptide reads, in one-letter code: MTALSEQARAKVNLTLRVVGRRVDGYHDLESVVAFADCADRLTLHPGAELSLVMSGPGAQDCGDTSDNLVLKATRLLAERVPNLRTGGFVLDKHLPVAAGIGGGSADAAAALRLLARANELSADDPRVVEAARLTGADVPVCLPSKPCVMTGVGENLSPLQLPRLPAVMVNPRVPVATKDVFAALGLRAGQLNVGVVDLLKSTGWPTDGSSAADWIAAVKRGTNDLEAPALKVESVVGDVLRALAALPGVRLSRMSGSGATCFALFANDDDAQAGAQLLKAAQPGWWVHAGALS.

The active site involves lysine 11. 96-106 (PVAAGIGGGSA) serves as a coordination point for ATP. Aspartate 138 is an active-site residue.

It belongs to the GHMP kinase family. IspE subfamily.

It carries out the reaction 4-CDP-2-C-methyl-D-erythritol + ATP = 4-CDP-2-C-methyl-D-erythritol 2-phosphate + ADP + H(+). The protein operates within isoprenoid biosynthesis; isopentenyl diphosphate biosynthesis via DXP pathway; isopentenyl diphosphate from 1-deoxy-D-xylulose 5-phosphate: step 3/6. Catalyzes the phosphorylation of the position 2 hydroxy group of 4-diphosphocytidyl-2C-methyl-D-erythritol. The protein is 4-diphosphocytidyl-2-C-methyl-D-erythritol kinase of Rhodopseudomonas palustris (strain BisB5).